Consider the following 500-residue polypeptide: Probable cytosol aminopeptidase (500 aa).

Mn(2+) is bound by residues K264 and D269. The active site involves K276. Residues D287, D346, and E348 each contribute to the Mn(2+) site. R350 is an active-site residue.

It belongs to the peptidase M17 family. It depends on Mn(2+) as a cofactor.

The protein localises to the cytoplasm. It catalyses the reaction Release of an N-terminal amino acid, Xaa-|-Yaa-, in which Xaa is preferably Leu, but may be other amino acids including Pro although not Arg or Lys, and Yaa may be Pro. Amino acid amides and methyl esters are also readily hydrolyzed, but rates on arylamides are exceedingly low.. The catalysed reaction is Release of an N-terminal amino acid, preferentially leucine, but not glutamic or aspartic acids.. In terms of biological role, presumably involved in the processing and regular turnover of intracellular proteins. Catalyzes the removal of unsubstituted N-terminal amino acids from various peptides. The chain is Probable cytosol aminopeptidase from Rhodopseudomonas palustris (strain BisB5).